Here is an 878-residue protein sequence, read N- to C-terminus: Alanine--tRNA ligase (878 aa).

Residues H570, H574, C672, and H676 each coordinate Zn(2+). Positions 844 to 864 are disordered; the sequence is GGKGGGGRPDMAQAGGPDASA. Residues 855–864 show a composition bias toward low complexity; sequence AQAGGPDASA.

This sequence belongs to the class-II aminoacyl-tRNA synthetase family. Zn(2+) serves as cofactor.

Its subcellular location is the cytoplasm. It carries out the reaction tRNA(Ala) + L-alanine + ATP = L-alanyl-tRNA(Ala) + AMP + diphosphate. Functionally, catalyzes the attachment of alanine to tRNA(Ala) in a two-step reaction: alanine is first activated by ATP to form Ala-AMP and then transferred to the acceptor end of tRNA(Ala). Also edits incorrectly charged Ser-tRNA(Ala) and Gly-tRNA(Ala) via its editing domain. This Paramagnetospirillum magneticum (strain ATCC 700264 / AMB-1) (Magnetospirillum magneticum) protein is Alanine--tRNA ligase.